The sequence spans 72 residues: UPF0270 protein YheU (72 aa).

It belongs to the UPF0270 family.

The polypeptide is UPF0270 protein YheU (Salmonella choleraesuis (strain SC-B67)).